Consider the following 153-residue polypeptide: UPF0756 membrane protein Pjdr2_2290 (153 aa).

The next 5 membrane-spanning stretches (helical) occupy residues 6–26 (LILVGLIVIGLIGRSPIIATA), 50–70 (LELGLLFLTLSVLVPFASGKV), 75–95 (LIAAFNTWPGWLALIGGAVAA), 111–131 (MVVGLVIGSIFGIIFLRGIPV), and 132–152 (GPLMAAGITAILYKLFKLMSG).

The protein belongs to the UPF0756 family.

It is found in the cell membrane. The polypeptide is UPF0756 membrane protein Pjdr2_2290 (Paenibacillus sp. (strain JDR-2)).